The following is a 29-amino-acid chain: MSAGVITGVLLVFLLLGYLVYALINAEAF.

Over 1–2 (MS) the chain is Periplasmic. Residues 3–24 (AGVITGVLLVFLLLGYLVYALI) traverse the membrane as a helical segment. Residues 25–29 (NAEAF) are Cytoplasmic-facing.

This sequence belongs to the KdpF family. In terms of assembly, the system is composed of three essential subunits: KdpA, KdpB and KdpC. The complex also contains KdpF, a small non-essential subunit. The KdpFABC complex exists as a dimer above concentrations of 30-50 nM, whereas the complex exists as a functional monomer at lower concentrations.

The protein resides in the cell inner membrane. Its function is as follows. Part of the high-affinity ATP-driven potassium transport (or Kdp) system, which catalyzes the hydrolysis of ATP coupled with the electrogenic transport of potassium into the cytoplasm. This subunit may be involved in stabilization of the complex. In Escherichia coli (strain K12), this protein is Potassium-transporting ATPase KdpF subunit (kdpF).